We begin with the raw amino-acid sequence, 291 residues long: Beta-lactamase CTX-M-14 (291 aa).

A signal peptide spans 1 to 28; the sequence is MVTKRVQRMMFAAAACIPLLLGSAPLYA. Ser-73 acts as the Nucleophile; acyl-ester intermediate in catalysis. Residues Lys-76, Ser-133, Glu-169, and Ser-240 each coordinate a beta-lactam.

The protein belongs to the class-A beta-lactamase family. Monomer.

The protein resides in the secreted. The enzyme catalyses a beta-lactam + H2O = a substituted beta-amino acid. Its activity is regulated as follows. Inhibited by the beta-lactamase-blocking agents clavulanic acid, tazobactam and sulbactam. Functionally, extended-spectrum beta-lactamase (ESBL) which confers resistance to penicillins, as well as first, second, and third-generation cephalosporins. Has cefotaxime-hydrolyzing activity. The sequence is that of Beta-lactamase CTX-M-14 from Escherichia coli.